We begin with the raw amino-acid sequence, 554 residues long: MSEAEARPTNFIRQIIDEDLASGKHTTVHTRFPPEPNGYLHIGHAKSICLNFGIAQDYKGQCNLRFDDTNPVKEDIEYVESIKNDVEWLGFHWSGNVRYSSDYFDQLHAYAIELINKGLAYVDELTPEQIREYRGTLTQPGKNSPYRDRSVEENLALFEKMRTGGFEEGKACLRAKIDMASPFIVMRDPVLYRIKFAEHHQTGNKWCIYPMYDFTHCISDALEGITHSLCTLEFQDNRRLYDWVLDNITIPVHPRQYEFSRLNLEYTVMSKRKLNLLVTDKHVEGWDDPRMPTISGLRRRGYTAASIREFCKRIGVTKQDNTIEMASLESCIREDLNENAPRAMAVIDPVKLVIENYQGEGEMVTMPNHPNKPEMGSRQVPFSGEIWIDRADFREEANKQYKRLVLGKEVRLRNAYVIKAERVEKDAEGNITTIFCTYDADTLSKDPADGRKVKGVIHWVSAAHALPIEIRLYDRLFSVPNPGAADDFLSVINPESLVIKQGFAEPSLKDAVAGKAFQFEREGYFCLDSRHSTAEKPVFNRTVGLRDTWAKVGE.

The 'HIGH' region motif lies at proline 34 to histidine 44. Residues glutamate 35–asparagine 37 and histidine 41–serine 47 each bind ATP. L-glutamine contacts are provided by aspartate 67 and tyrosine 212. ATP is bound by residues threonine 231, arginine 261–leucine 262, and methionine 269–lysine 271. A 'KMSKS' region motif is present at residues valine 268–arginine 272. Positions threonine 317–glutamate 324 are interaction with tRNA.

The protein belongs to the class-I aminoacyl-tRNA synthetase family. Monomer.

Its subcellular location is the cytoplasm. It carries out the reaction tRNA(Gln) + L-glutamine + ATP = L-glutaminyl-tRNA(Gln) + AMP + diphosphate. The chain is Glutamine--tRNA ligase from Escherichia coli O7:K1 (strain IAI39 / ExPEC).